Here is a 136-residue protein sequence, read N- to C-terminus: MLSPKRTRFRKQHRGRMKGKSCRGNRICFGRYALQALEPAWITARQIEAGRRAITRYARRGGKIWVRIFPDKPVTLRPTETRMGSGKGSPEYWVSVVKPGRILYEMGGVSETVARAAISIAASKMPIRSQFIRLEI.

Residues 1 to 20 (MLSPKRTRFRKQHRGRMKGK) form a disordered region.

It belongs to the universal ribosomal protein uL16 family. Part of the 50S ribosomal subunit.

Its subcellular location is the plastid. It is found in the chloroplast. This is Large ribosomal subunit protein uL16c from Triticum aestivum (Wheat).